Reading from the N-terminus, the 194-residue chain is Leucyl/phenylalanyl-tRNA--protein transferase (194 aa).

It belongs to the L/F-transferase family.

It is found in the cytoplasm. The catalysed reaction is N-terminal L-lysyl-[protein] + L-leucyl-tRNA(Leu) = N-terminal L-leucyl-L-lysyl-[protein] + tRNA(Leu) + H(+). It carries out the reaction N-terminal L-arginyl-[protein] + L-leucyl-tRNA(Leu) = N-terminal L-leucyl-L-arginyl-[protein] + tRNA(Leu) + H(+). The enzyme catalyses L-phenylalanyl-tRNA(Phe) + an N-terminal L-alpha-aminoacyl-[protein] = an N-terminal L-phenylalanyl-L-alpha-aminoacyl-[protein] + tRNA(Phe). In terms of biological role, functions in the N-end rule pathway of protein degradation where it conjugates Leu, Phe and, less efficiently, Met from aminoacyl-tRNAs to the N-termini of proteins containing an N-terminal arginine or lysine. The polypeptide is Leucyl/phenylalanyl-tRNA--protein transferase (Chlorobium limicola (strain DSM 245 / NBRC 103803 / 6330)).